The following is a 347-amino-acid chain: MRIEEDLKLGFKDVLIRPKRSTLKSRSDVELERQFTFKHSGQSWSGVPIIAANMDTVGTFSMASALASFDILTAVHKHYSVEEWQAFINNSSADVLKHVMVSTGTSDADFEKTKQILDLNPALNFVCIDVANGYSEHFVQFVAKAREAWPTKTICAGNVVTGEMCEELILSGADIVKVGIGPGSVCTTRVKTGVGYPQLSAVIECADAAHGLGGMIVSDGGCTTPGDVAKAFGGGADFVMLGGMLAGHEESGGRIVEENGEKFMLFYGMSSESAMKRHVGGVAEYRAAEGKTVKLPLRGPVENTARDILGGLRSACTYVGASRLKELTKRTTFIRVQEQENRIFNNL.

108–131 (ADFEKTKQILDLNPALNFVCIDVA) contributes to the NADP(+) binding site. K(+)-binding residues include G181 and G183. C186 acts as the Thioimidate intermediate in catalysis. 216 to 239 (IVSDGGCTTPGDVAKAFGGGADFV) is an NADP(+) binding site.

The protein belongs to the IMPDH/GMPR family. GuaC type 1 subfamily. Homotetramer.

It carries out the reaction IMP + NH4(+) + NADP(+) = GMP + NADPH + 2 H(+). Functionally, catalyzes the irreversible NADPH-dependent deamination of GMP to IMP. It functions in the conversion of nucleobase, nucleoside and nucleotide derivatives of G to A nucleotides, and in maintaining the intracellular balance of A and G nucleotides. This chain is GMP reductase, found in Escherichia coli O127:H6 (strain E2348/69 / EPEC).